Consider the following 488-residue polypeptide: Galactose-1-phosphate uridylyltransferase (488 aa).

It belongs to the galactose-1-phosphate uridylyltransferase type 2 family.

It localises to the cytoplasm. The enzyme catalyses alpha-D-galactose 1-phosphate + UDP-alpha-D-glucose = alpha-D-glucose 1-phosphate + UDP-alpha-D-galactose. It functions in the pathway carbohydrate metabolism; galactose metabolism. The chain is Galactose-1-phosphate uridylyltransferase (galT) from Lactobacillus helveticus (Lactobacillus suntoryeus).